A 192-amino-acid polypeptide reads, in one-letter code: Hydrogenase expression/formation protein HupD (192 aa).

3 residues coordinate Ni(2+): glutamate 23, aspartate 69, and histidine 100.

The protein belongs to the peptidase A31 family.

Not known. Could be involved in the processing of hydrogenase. In Bradyrhizobium diazoefficiens (strain JCM 10833 / BCRC 13528 / IAM 13628 / NBRC 14792 / USDA 110), this protein is Hydrogenase expression/formation protein HupD (hupD).